The sequence spans 149 residues: Histone H2B.3, sperm (149 aa).

The interval 1 to 57 (MPRSPAKTSPRKGSPRKGSPRKGSPSRKASPKRGGKGAKRAGKGGRRRRVVKRRRRR) is disordered. 6 short sequence motifs (SPKK motif) span residues 4–7 (SPAK), 9–12 (SPRK), 14–17 (SPRK), 19–22 (SPRK), 24–27 (SPSR), and 30–33 (SPKR). Residues 9–20 (SPRKGSPRKGSP) show a composition bias toward basic residues. 3 positions are modified to phosphoserine: Ser19, Ser24, and Ser30. The span at 29-57 (ASPKRGGKGAKRAGKGGRRRRVVKRRRRR) shows a compositional bias: basic residues. Residue Ser136 is glycosylated (O-linked (GlcNAc) serine). Lys144 participates in a covalent cross-link: Glycyl lysine isopeptide (Lys-Gly) (interchain with G-Cter in ubiquitin).

Belongs to the histone H2B family. In terms of assembly, the nucleosome is a histone octamer containing two molecules each of H2A, H2B, H3 and H4 assembled in one H3-H4 heterotetramer and two H2A-H2B heterodimers. The octamer wraps approximately 147 bp of DNA. In terms of processing, monoubiquitination of Lys-144 gives a specific tag for epigenetic transcriptional activation and is also prerequisite for histone H3 'Lys-4' and 'Lys-79' methylation. Phosphorylated on SPKK motifs 4, 5 and 6; which may regulate DNA binding. Dephosphorylated during maturation of spermatids to mature sperm and rephosphorylated at fertilization. Post-translationally, glcNAcylation at Ser-136 promotes monoubiquitination of Lys-144. It fluctuates in response to extracellular glucose, and associates with transcribed genes.

It localises to the nucleus. The protein resides in the chromosome. Core component of nucleosome. Nucleosomes wrap and compact DNA into chromatin, limiting DNA accessibility to the cellular machineries which require DNA as a template. Histones thereby play a central role in transcription regulation, DNA repair, DNA replication and chromosomal stability. DNA accessibility is regulated via a complex set of post-translational modifications of histones, also called histone code, and nucleosome remodeling. The chain is Histone H2B.3, sperm from Parechinus angulosus (Angulate sea urchin).